Here is a 117-residue protein sequence, read N- to C-terminus: UPF0102 protein YPN_3432 (117 aa).

It belongs to the UPF0102 family.

The protein is UPF0102 protein YPN_3432 of Yersinia pestis bv. Antiqua (strain Nepal516).